We begin with the raw amino-acid sequence, 690 residues long: Elongation factor G (690 aa).

The tr-type G domain occupies 8–283 (ERYRNFGIMA…AVVDFMPSPL (276 aa)). GTP is bound by residues 17-24 (AHIDAGKT), 81-85 (DTPGH), and 135-138 (NKLD).

The protein belongs to the TRAFAC class translation factor GTPase superfamily. Classic translation factor GTPase family. EF-G/EF-2 subfamily.

The protein resides in the cytoplasm. Catalyzes the GTP-dependent ribosomal translocation step during translation elongation. During this step, the ribosome changes from the pre-translocational (PRE) to the post-translocational (POST) state as the newly formed A-site-bound peptidyl-tRNA and P-site-bound deacylated tRNA move to the P and E sites, respectively. Catalyzes the coordinated movement of the two tRNA molecules, the mRNA and conformational changes in the ribosome. In Novosphingobium aromaticivorans (strain ATCC 700278 / DSM 12444 / CCUG 56034 / CIP 105152 / NBRC 16084 / F199), this protein is Elongation factor G.